We begin with the raw amino-acid sequence, 278 residues long: HTH-type transcriptional activator RhaS (278 aa).

The HTH araC/xylS-type domain maps to 174–272 (NQLLAWLEDH…DWSPRDIRQG (99 aa)). DNA-binding regions (H-T-H motif) lie at residues 191 to 212 (EEVA…KQQT) and 239 to 262 (VTDI…RREF).

Binds DNA as a dimer.

Its subcellular location is the cytoplasm. In terms of biological role, activates expression of the rhaBAD and rhaT operons. The chain is HTH-type transcriptional activator RhaS from Klebsiella pneumoniae (strain 342).